A 1597-amino-acid chain; its full sequence is Protein STU1 (1597 aa).

4 disordered regions span residues 220–265, 519–958, 1005–1154, and 1307–1332; these read GNSS…PSSS, DKVN…RPIH, DAEA…ELNT, and SQRP…SSLV. The span at 535–552 shows a compositional bias: basic and acidic residues; that stretch reads APRESLKEVMRRSRESSV. Low complexity predominate over residues 577-605; the sequence is SSGLVGRSLSGSNLTDRSNRLSSTSTSSR. Composition is skewed to polar residues over residues 610–622 and 632–645; these read AVSD…QMTR and PSLT…SLTR. Composition is skewed to basic and acidic residues over residues 660–673 and 694–708; these read GSRE…DQNR and ESSR…DPSR. Polar residues predominate over residues 709 to 726; the sequence is ESSLAPSVHSSTAISRES. Over residues 765–781 the composition is skewed to low complexity; it reads EETMNEVTTAEATATTA. 2 stretches are compositionally biased toward polar residues: residues 791–801 and 808–822; these read PRESTPPNSSP and PATQ…TGKS. Positions 832 to 846 are enriched in basic and acidic residues; it reads ELSRDLNGESKHLKE. Composition is skewed to polar residues over residues 918–933, 1013–1025, and 1036–1045; these read DSQS…QSEP, TEQT…SDTA, and NSEQGPSTEP. Residues 1081 to 1091 show a composition bias toward basic and acidic residues; it reads ASDEIETDHTK. The segment covering 1108-1119 has biased composition (acidic residues); it reads EPMEICDSDNDA. A compositionally biased stretch (polar residues) spans 1122–1139; sequence NGTNPDTKCQDQQDSTTP. The stretch at 1537–1573 is one HEAT repeat; the sequence is PSYETQLLALITELISDPDPLVRRVTVGLVVRVLRVS.

It belongs to the CLASP family. In terms of assembly, interacts with microtubules.

It is found in the cytoplasm. It localises to the cytoskeleton. The protein localises to the nucleus. The protein resides in the spindle. Microtubule binding protein that promotes the stabilization of dynamic microtubules. Required for mitotic spindle formation. This chain is Protein STU1 (STU1), found in Yarrowia lipolytica (strain CLIB 122 / E 150) (Yeast).